The chain runs to 236 residues: Leucyl/phenylalanyl-tRNA--protein transferase (236 aa).

It belongs to the L/F-transferase family.

It is found in the cytoplasm. It catalyses the reaction N-terminal L-lysyl-[protein] + L-leucyl-tRNA(Leu) = N-terminal L-leucyl-L-lysyl-[protein] + tRNA(Leu) + H(+). It carries out the reaction N-terminal L-arginyl-[protein] + L-leucyl-tRNA(Leu) = N-terminal L-leucyl-L-arginyl-[protein] + tRNA(Leu) + H(+). The enzyme catalyses L-phenylalanyl-tRNA(Phe) + an N-terminal L-alpha-aminoacyl-[protein] = an N-terminal L-phenylalanyl-L-alpha-aminoacyl-[protein] + tRNA(Phe). In terms of biological role, functions in the N-end rule pathway of protein degradation where it conjugates Leu, Phe and, less efficiently, Met from aminoacyl-tRNAs to the N-termini of proteins containing an N-terminal arginine or lysine. The sequence is that of Leucyl/phenylalanyl-tRNA--protein transferase from Shewanella sediminis (strain HAW-EB3).